The sequence spans 401 residues: Elongation factor Tu (401 aa).

A tr-type G domain is found at 10 to 211 (KPHLNIGTIG…AVDTYVPNPT (202 aa)). A G1 region spans residues 19-26 (GHVDHGKT). Residue 19 to 26 (GHVDHGKT) coordinates GTP. Residue Thr-26 participates in Mg(2+) binding. The G2 stretch occupies residues 62–66 (GITIA). Positions 83-86 (DCPG) are G3. GTP-binding positions include 83 to 87 (DCPGH) and 138 to 141 (NKAD). The tract at residues 138-141 (NKAD) is G4. Positions 179-181 (SAL) are G5.

Belongs to the TRAFAC class translation factor GTPase superfamily. Classic translation factor GTPase family. EF-Tu/EF-1A subfamily. Monomer.

It localises to the cytoplasm. It carries out the reaction GTP + H2O = GDP + phosphate + H(+). Functionally, GTP hydrolase that promotes the GTP-dependent binding of aminoacyl-tRNA to the A-site of ribosomes during protein biosynthesis. In Leptospira biflexa serovar Patoc (strain Patoc 1 / Ames), this protein is Elongation factor Tu.